The sequence spans 392 residues: Probable inactive serine/threonine-protein kinase DDB_G0280855 (392 aa).

One can recognise a Protein kinase domain in the interval 46–349 (ITKKTIYACD…IERIIQHPYF (304 aa)). ATP-binding positions include 52 to 60 (YACDINGTM) and Lys75.

Belongs to the protein kinase superfamily. CMGC Ser/Thr protein kinase family. MAP kinase subfamily.

The polypeptide is Probable inactive serine/threonine-protein kinase DDB_G0280855 (Dictyostelium discoideum (Social amoeba)).